Here is a 105-residue protein sequence, read N- to C-terminus: MNSISVSVTNGLIFSTLLFVISVAGIIINRRNILILLMSIELMLLAVNTNFLIFANMHHQAMGGVFVFFIMAVAAAETAIGLAIVVAIFRKRKTIDLSKLNTLRG.

3 helical membrane-spanning segments follow: residues 8-28 (VTNGLIFSTLLFVISVAGIII), 33-53 (ILILLMSIELMLLAVNTNFLI), and 65-85 (VFVFFIMAVAAAETAIGLAIV).

The protein belongs to the complex I subunit 4L family. As to quaternary structure, NDH-1 is composed of 14 different subunits. Subunits NuoA, H, J, K, L, M, N constitute the membrane sector of the complex.

The protein resides in the cell inner membrane. The enzyme catalyses a quinone + NADH + 5 H(+)(in) = a quinol + NAD(+) + 4 H(+)(out). NDH-1 shuttles electrons from NADH, via FMN and iron-sulfur (Fe-S) centers, to quinones in the respiratory chain. The immediate electron acceptor for the enzyme in this species is believed to be ubiquinone. Couples the redox reaction to proton translocation (for every two electrons transferred, four hydrogen ions are translocated across the cytoplasmic membrane), and thus conserves the redox energy in a proton gradient. This chain is NADH-quinone oxidoreductase subunit K, found in Francisella philomiragia subsp. philomiragia (strain ATCC 25017 / CCUG 19701 / FSC 153 / O#319-036).